The chain runs to 301 residues: Putative phosphoenolpyruvate synthase regulatory protein (301 aa).

The span at 1–24 (MSEPVAPDGAQPAPAGATPQPLQP) shows a compositional bias: low complexity. The tract at residues 1 to 27 (MSEPVAPDGAQPAPAGATPQPLQPIAG) is disordered. 181–188 (GVSRSGKT) lines the ADP pocket.

It belongs to the pyruvate, phosphate/water dikinase regulatory protein family. PSRP subfamily.

The catalysed reaction is [pyruvate, water dikinase] + ADP = [pyruvate, water dikinase]-phosphate + AMP + H(+). It carries out the reaction [pyruvate, water dikinase]-phosphate + phosphate + H(+) = [pyruvate, water dikinase] + diphosphate. Its function is as follows. Bifunctional serine/threonine kinase and phosphorylase involved in the regulation of the phosphoenolpyruvate synthase (PEPS) by catalyzing its phosphorylation/dephosphorylation. In Cupriavidus pinatubonensis (strain JMP 134 / LMG 1197) (Cupriavidus necator (strain JMP 134)), this protein is Putative phosphoenolpyruvate synthase regulatory protein.